The primary structure comprises 189 residues: Interferon alpha-16 (189 aa).

The first 23 residues, Met-1 to Gly-23, serve as a signal peptide directing secretion. Disulfide bonds link Cys-24-Cys-122 and Cys-52-Cys-162.

It belongs to the alpha/beta interferon family.

The protein localises to the secreted. Its function is as follows. Produced by macrophages, IFN-alpha have antiviral activities. Interferon stimulates the production of two enzymes: a protein kinase and an oligoadenylate synthetase. This Homo sapiens (Human) protein is Interferon alpha-16 (IFNA16).